The sequence spans 87 residues: LYR motif-containing protein 2 (87 aa).

The N-terminal 19 residues, 1–19, are a transit peptide targeting the mitochondrion; the sequence is MGSRLPPAALTLKQFLVRQ.

Belongs to the complex I LYR family.

The protein resides in the mitochondrion. Functionally, involved in efficient integration of the N-module into mitochondrial respiratory chain complex I. In Xenopus tropicalis (Western clawed frog), this protein is LYR motif-containing protein 2 (lyrm2).